The primary structure comprises 285 residues: Polyamine aminopropyltransferase (285 aa).

The region spanning 2–237 is the PABS domain; sequence DLWFSESHTP…GYWCFGFASK (236 aa). An S-methyl-5'-thioadenosine-binding site is contributed by Gln-31. Asp-86 provides a ligand contact to spermidine. Residues Glu-106 and 137–138 each bind S-methyl-5'-thioadenosine; that span reads DG. Asp-155 functions as the Proton acceptor in the catalytic mechanism.

This sequence belongs to the spermidine/spermine synthase family. As to quaternary structure, homodimer or homotetramer.

It is found in the cytoplasm. It catalyses the reaction S-adenosyl 3-(methylsulfanyl)propylamine + putrescine = S-methyl-5'-thioadenosine + spermidine + H(+). It functions in the pathway amine and polyamine biosynthesis; spermidine biosynthesis; spermidine from putrescine: step 1/1. Its function is as follows. Catalyzes the irreversible transfer of a propylamine group from the amino donor S-adenosylmethioninamine (decarboxy-AdoMet) to putrescine (1,4-diaminobutane) to yield spermidine. This chain is Polyamine aminopropyltransferase, found in Streptococcus uberis (strain ATCC BAA-854 / 0140J).